The sequence spans 262 residues: Acyl-[acyl-carrier-protein]--UDP-N-acetylglucosamine O-acyltransferase (262 aa).

This sequence belongs to the transferase hexapeptide repeat family. LpxA subfamily. In terms of assembly, homotrimer.

The protein localises to the cytoplasm. The catalysed reaction is a (3R)-hydroxyacyl-[ACP] + UDP-N-acetyl-alpha-D-glucosamine = a UDP-3-O-[(3R)-3-hydroxyacyl]-N-acetyl-alpha-D-glucosamine + holo-[ACP]. Its pathway is glycolipid biosynthesis; lipid IV(A) biosynthesis; lipid IV(A) from (3R)-3-hydroxytetradecanoyl-[acyl-carrier-protein] and UDP-N-acetyl-alpha-D-glucosamine: step 1/6. Its function is as follows. Involved in the biosynthesis of lipid A, a phosphorylated glycolipid that anchors the lipopolysaccharide to the outer membrane of the cell. In Escherichia coli O157:H7, this protein is Acyl-[acyl-carrier-protein]--UDP-N-acetylglucosamine O-acyltransferase.